Here is a 165-residue protein sequence, read N- to C-terminus: Large ribosomal subunit protein uL11 (165 aa).

It belongs to the universal ribosomal protein uL11 family. In terms of assembly, part of the ribosomal stalk of the 50S ribosomal subunit. Interacts with L10 and the large rRNA to form the base of the stalk. L10 forms an elongated spine to which L12 dimers bind in a sequential fashion forming a multimeric L10(L12)X complex.

Its function is as follows. Forms part of the ribosomal stalk which helps the ribosome interact with GTP-bound translation factors. The sequence is that of Large ribosomal subunit protein uL11 from Thermococcus kodakarensis (strain ATCC BAA-918 / JCM 12380 / KOD1) (Pyrococcus kodakaraensis (strain KOD1)).